Reading from the N-terminus, the 623-residue chain is Adenine deaminase 2 (623 aa).

This sequence belongs to the metallo-dependent hydrolases superfamily. Adenine deaminase family. The cofactor is Mn(2+).

The catalysed reaction is adenine + H2O + H(+) = hypoxanthine + NH4(+). The polypeptide is Adenine deaminase 2 (Jannaschia sp. (strain CCS1)).